Reading from the N-terminus, the 562-residue chain is MNVFGKKEEKQEKVYSLQNGFPYSHHPYASQYSRPDGPILLQDFHLLENIASFDRERVPERVVHAKGGGCRLEFELTDSLSDITYAAPYQNVGYKCPGLVRFSTVGGESGTPDTARDPRGVSFKFYTEWGNHDWVFNNTPVFFLRDAIKFPVFIHSQKRDPQSHLNQFQDTTIYWDYLTLNPESIHQITYMFGDRGTPASWASMNAYSGHSFIMVNKEGKDTYVQFHVLSDTGFETLTGDKAAELSGSHPDYNQTKLFTQLQNGEKPKFNCYVQTMTPEQATKFRYSVNDLTKIWPHKEFPLRKFGTITLTENVDNYFQEIEQVAFSPTNTCIPGIKPSNDSVLQARLFSYPDTQRHRLGANYQQLPVNRPRNLGCPYSKGDSQYTAEQCPFKAVNFQRDGPMSYYNFGPEPNYISSLPNQTLKFKNEDNDEVSDKFKGIVLDEVTEVSVRKQEQDQIRNEHIVDAKINQYYYVYGISPLDFEQPRALYEKVYNDEQKKLFVHNVVCHACKIKDPKVKKRVTQYFGLLNEDLGKVIAEGLGVPWEPVDLEGYAKTWSIASAN.

Residues His-64 and Asn-137 contribute to the active site. Position 351 (Tyr-351) interacts with heme.

It belongs to the catalase family. In terms of assembly, homotetramer. The cofactor is heme.

The protein localises to the cytoplasm. The catalysed reaction is 2 H2O2 = O2 + 2 H2O. Functionally, occurs in almost all aerobically respiring organisms and serves to protect cells from the toxic effects of hydrogen peroxide. The protein is Catalase T (CTT1) of Saccharomyces cerevisiae (strain YJM789) (Baker's yeast).